We begin with the raw amino-acid sequence, 102 residues long: UPF0751 protein Dhaf_1351 (102 aa).

The protein belongs to the UPF0751 family.

This chain is UPF0751 protein Dhaf_1351, found in Desulfitobacterium hafniense (strain DSM 10664 / DCB-2).